Consider the following 367-residue polypeptide: Gibberellin 20 oxidase 3 (367 aa).

Residues 198–304 form the Fe2OG dioxygenase domain; sequence DGDPVMRLNH…RRSLTFFLNP (107 aa). Y208 lines the 2-oxoglutarate pocket. Fe cation contacts are provided by H223, D225, and H285. R295 and S297 together coordinate 2-oxoglutarate.

The protein belongs to the iron/ascorbate-dependent oxidoreductase family. The cofactor is Fe(2+). L-ascorbate serves as cofactor.

It catalyses the reaction gibberellin A12 + 2 2-oxoglutarate + 3 O2 + H(+) = gibberellin A9 + 2 succinate + 3 CO2 + 2 H2O. The enzyme catalyses gibberellin A53 + 2 2-oxoglutarate + 3 O2 + H(+) = gibberellin A20 + 2 succinate + 3 CO2 + 2 H2O. Functionally, key oxidase enzyme in the biosynthesis of gibberellin. Catalyzes the formation of bioactive gibberellins (GAs) via a three-step oxidation at C-20 of the GA skeleton. Controls the elongation of the vegetative shoot and plant height by the regulation of active gibberellin levels. In Oryza sativa subsp. japonica (Rice), this protein is Gibberellin 20 oxidase 3.